A 98-amino-acid polypeptide reads, in one-letter code: Small ribosomal subunit protein uS19c (98 aa).

The protein belongs to the universal ribosomal protein uS19 family.

The protein resides in the plastid. It localises to the chloroplast. Protein S19 forms a complex with S13 that binds strongly to the 16S ribosomal RNA. The sequence is that of Small ribosomal subunit protein uS19c from Jasminum nudiflorum (Winter jasmine).